We begin with the raw amino-acid sequence, 300 residues long: ATP-dependent (S)-NAD(P)H-hydrate dehydratase (300 aa).

Residues 14–293 (LLALFKTVVP…NQIPSVFQTE (280 aa)) form the YjeF C-terminal domain. Residues G114 and 167 to 173 (NVMEFQR) each bind (6S)-NADPHX. Residues 198–202 (KGAND) and 219–228 (GSGRRCGGQG) contribute to the ATP site. Residue D229 coordinates (6S)-NADPHX.

It belongs to the NnrD/CARKD family. It depends on Mg(2+) as a cofactor.

It carries out the reaction (6S)-NADHX + ATP = ADP + phosphate + NADH + H(+). The catalysed reaction is (6S)-NADPHX + ATP = ADP + phosphate + NADPH + H(+). In terms of biological role, catalyzes the dehydration of the S-form of NAD(P)HX at the expense of ATP, which is converted to ADP. Together with NAD(P)HX epimerase, which catalyzes the epimerization of the S- and R-forms, the enzyme allows the repair of both epimers of NAD(P)HX, a damaged form of NAD(P)H that is a result of enzymatic or heat-dependent hydration. The polypeptide is ATP-dependent (S)-NAD(P)H-hydrate dehydratase (Drosophila melanogaster (Fruit fly)).